The chain runs to 603 residues: O-acetyltransferase OatA (603 aa).

11 consecutive transmembrane segments (helical) span residues 17-37, 45-65, 87-107, 148-168, 177-197, 211-231, 239-259, 268-288, 311-331, 333-353, and 382-402; these read YLPG…IYHL, GFLG…SLLI, LIPA…IFKP, LWSL…ITFL, IIQT…VIHF, TRLQ…PFAL, IVVS…TLFF, IYNG…AIAV, YSLY…YVQG, IPVY…EISY, and VLVI…FDAL. Active-site residues include serine 453, aspartate 575, and histidine 578.

The protein belongs to the acyltransferase 3 family. In terms of assembly, monomer.

It is found in the cell membrane. Its function is as follows. Responsible for O-acetylation at the C(6)-hydroxyl group of N-acetylmuramyl residues, forming the corresponding N,6-O-diacetylmuramic acid of the peptidoglycan. O-acetylation of the peptidoglycan is the major determinant for lysozyme resistance. The polypeptide is O-acetyltransferase OatA (Staphylococcus aureus (strain NCTC 8325 / PS 47)).